A 359-amino-acid chain; its full sequence is Magnesium transporter NIPA2 (359 aa).

At 1-9 (MSLGRGKYD) the chain is on the extracellular side. Residues 10-30 (FYIGLGLAMTSSIFIGGSFIL) traverse the membrane as a helical segment. Topologically, residues 31–56 (KKKGLLRLARKGSMRAGQGGHAYLKE) are cytoplasmic. A helical transmembrane segment spans residues 57–77 (WLWWAGLLSMGAGEVANFAAY). A topological domain (extracellular) is located at residue Ala78. A helical membrane pass occupies residues 79–99 (FAPATLVTPLGALSVLVSAIL). At 100–107 (SSYFLNER) the chain is on the cytoplasmic side. A helical membrane pass occupies residues 108–128 (LNLHGKIGCLLSILGSTVMVI). The Extracellular segment spans residues 129-149 (HAPKEEEIETLNEMSHKLGDP). Residues 150–170 (GFVVFATFVVIVALIFIFVVG) form a helical membrane-spanning segment. Topologically, residues 171 to 175 (PRHGQ) are cytoplasmic. Residues 176-196 (TNILVYITICSVIGAFSVSCV) traverse the membrane as a helical segment. Over 197–215 (KGLGIAIKELLAGKPVLQH) the chain is Extracellular. Residues 216 to 236 (PLAWILLFSLVVCVSTQINYL) form a helical membrane-spanning segment. The Cytoplasmic portion of the chain corresponds to 237-246 (NRALDIFNTS). Residues 247-267 (IVTPIYYVFFTTSVLTCSAIL) form a helical membrane-spanning segment. At 268–278 (FKEWQDMPVDD) the chain is on the extracellular side. A helical transmembrane segment spans residues 279-299 (VIGTLSGFFTIIVGIFLLHAF). The Cytoplasmic segment spans residues 300–359 (KDVSFSLASLPVSFRKDEKAMNGNLSSMYEVLNNNEDDLPCGIEHTGENISRRNGNLPSF).

This sequence belongs to the NIPA family. In terms of tissue distribution, widely expressed. Expressed at high levels in the kidney.

Its subcellular location is the cell membrane. The protein resides in the early endosome. It catalyses the reaction Mg(2+)(in) = Mg(2+)(out). Functionally, acts as a selective Mg(2+) transporter. The polypeptide is Magnesium transporter NIPA2 (Nipa2) (Mus musculus (Mouse)).